Here is a 413-residue protein sequence, read N- to C-terminus: Probable short/branched chain specific acyl-CoA dehydrogenase (413 aa).

FAD contacts are provided by residues 152–161 (FCLSESGSGS) and 186–188 (WIT). Ser161 contacts substrate. Substrate contacts are provided by residues Tyr208, Tyr262, and 270-273 (NEGR). FAD-binding positions include Arg298, Gln309, and 366–370 (SMLGG). Glu393 serves as the catalytic Proton acceptor. 395–397 (TSN) is a binding site for FAD.

Belongs to the acyl-CoA dehydrogenase family. In terms of assembly, homotetramer. FAD is required as a cofactor.

The enzyme catalyses 2-methylbutanoyl-CoA + oxidized [electron-transfer flavoprotein] + H(+) = (2E)-2-methylbut-2-enoyl-CoA + reduced [electron-transfer flavoprotein]. It functions in the pathway lipid metabolism; mitochondrial fatty acid beta-oxidation. It participates in amino-acid degradation; L-isoleucine degradation. Its function is as follows. Probable short and branched chain specific acyl-CoA dehydrogenase that catalyzes the removal of one hydrogen from C-2 and C-3 of the fatty acyl-CoA thioester, resulting in the formation of trans-2-enoyl-CoA. In Dictyostelium discoideum (Social amoeba), this protein is Probable short/branched chain specific acyl-CoA dehydrogenase (acadsb).